A 107-amino-acid polypeptide reads, in one-letter code: Small ribosomal subunit protein uS17 (107 aa).

This sequence belongs to the universal ribosomal protein uS17 family. In terms of assembly, part of the 30S ribosomal subunit.

Functionally, one of the primary rRNA binding proteins, it binds specifically to the 5'-end of 16S ribosomal RNA. This Aquifex aeolicus (strain VF5) protein is Small ribosomal subunit protein uS17.